A 430-amino-acid polypeptide reads, in one-letter code: 2-deoxy-scyllo-inosose synthase (430 aa).

NAD(+)-binding positions include aspartate 42, 73 to 76 (EVHK), 105 to 109 (GVTGN), 129 to 130 (TT), 140 to 142 (SLK), and 151 to 152 (KN). Lysine 142 is a catalytic residue. Glutamate 184 contributes to the Co(2+) binding site. Glutamate 244 is a catalytic residue. Histidine 247 and histidine 263 together coordinate Co(2+). The disordered stretch occupies residues 371 to 430 (RGGAGGGAAEPAAARTGPVPDGPEAAVPATPGPVPAGPAAAAPLPSGPAPTAPAAAGPVP). Low complexity predominate over residues 379–399 (AEPAAARTGPVPDGPEAAVPA).

It belongs to the sugar phosphate cyclases superfamily. DOI synthase family. NAD(+) is required as a cofactor. Co(2+) serves as cofactor.

It carries out the reaction D-glucose 6-phosphate = 2-deoxy-L-scyllo-inosose + phosphate. It participates in metabolic intermediate biosynthesis; 2-deoxystreptamine biosynthesis; 2-deoxystreptamine from D-glucose 6-phosphate: step 1/4. It functions in the pathway antibiotic biosynthesis; neomycin biosynthesis. In terms of biological role, catalyzes the intramolecular carbocycle formation from D-glucose-6-phosphate to 2-deoxy-scyllo-inosose (DOI). The protein is 2-deoxy-scyllo-inosose synthase (neoC) of Streptomyces fradiae (Streptomyces roseoflavus).